A 581-amino-acid chain; its full sequence is Neither inactivation nor afterpotential protein G (581 aa).

The signal sequence occupies residues 1–26; sequence MGMKFQKILVLAGIVIGFLSIIVVLA. An FAD-binding site is contributed by 48-77; sequence DYVIVGGGTGGSTLTSLLAKNSNGSVLLIE. N-linked (GlcNAc...) asparagine glycans are attached at residues N70, N156, N404, and N464. H516 serves as the catalytic Proton acceptor.

It belongs to the GMC oxidoreductase family. It depends on FAD as a cofactor.

Its subcellular location is the secreted. Functionally, oxidoreductase involved in biosynthesis of 3-hydroxyretinal, a chromophore for rhodopsin Rh1. Not responsible for the initial hydroxylation of the retinal ring but rather acts in a subsequent step in chromophore production. May catalyze the conversion of (3R)-3-hydroxyretinol to the 3S enantiomer. This is Neither inactivation nor afterpotential protein G (ninaG) from Drosophila melanogaster (Fruit fly).